Consider the following 634-residue polypeptide: Nucleoside triphosphatase I (634 aa).

In terms of domain architecture, Helicase ATP-binding spans 41–203; it reads FLGLDSMNSL…ALLVNLLRPG (163 aa). 54–61 serves as a coordination point for ATP; sequence QETGVGKT. Residues 140-143 carry the DEXH box motif; that stretch reads DECH. Residues 355 to 531 enclose the Helicase C-terminal domain; that stretch reads SLYQALYEHS…EFSQLYRVLK (177 aa). The binding to the cap-specific mRNA (nucleoside-2'-O-)-methyltransferase stretch occupies residues 456-523; it reads DIFILDMTWN…EIIQNKAREF (68 aa).

Belongs to the helicase family. NPH I subfamily. In terms of assembly, monomer. Interacts (via C-terminus) with RAP94 (via N-terminus). Interacts with the cap-specific mRNA (nucleoside-2'-O-)-methyltransferase.

It localises to the virion. The enzyme catalyses a ribonucleoside 5'-triphosphate + H2O = a ribonucleoside 5'-diphosphate + phosphate + H(+). In terms of biological role, DNA-dependent ATPase required for providing the needed energy to achieve the termination of early transcripts. Acts in concert with the RAP94 subunit of the virion RNA polymerase and the capping enzyme/VTF to catalyze release of UUUUUNU-containing nascent RNA from the elongation complex. NPH-I must bind ssDNA in order to exhibit ATPase activity. The chain is Nucleoside triphosphatase I (NPH1) from Homo sapiens (Human).